We begin with the raw amino-acid sequence, 838 residues long: Probable bifunctional folylpolyglutamate synthase/dihydropteroate synthase (838 aa).

The folylpolyglutamate synthase stretch occupies residues 1 to 418; that stretch reads MEYHEAVNFL…LVVGSLYVVA (418 aa). 46–52 is a binding site for ATP; it reads GSNGKGS. Positions 541–561 are disordered; the sequence is AADAGEDDERGAGDASDAGHD. The region spanning 569-819 is the Pterin-binding domain; sequence TAVMGILNVT…DVPENVAAVN (251 aa). The segment at 571 to 838 is DHPS; it reads VMGILNVTPN…RFEADAERED (268 aa). A Mg(2+)-binding site is contributed by Asn576. Residues Thr616, Asp649, Asn668, Asp738, Lys774, and 807–809 each bind (7,8-dihydropterin-6-yl)methyl diphosphate; that span reads RVH.

This sequence in the N-terminal section; belongs to the folylpolyglutamate synthase family. In the C-terminal section; belongs to the DHPS family. Mg(2+) serves as cofactor.

It carries out the reaction (6S)-5,6,7,8-tetrahydrofolyl-(gamma-L-Glu)(n) + L-glutamate + ATP = (6S)-5,6,7,8-tetrahydrofolyl-(gamma-L-Glu)(n+1) + ADP + phosphate + H(+). The catalysed reaction is (7,8-dihydropterin-6-yl)methyl diphosphate + 4-aminobenzoate = 7,8-dihydropteroate + diphosphate. It participates in cofactor biosynthesis; tetrahydrofolylpolyglutamate biosynthesis. It functions in the pathway cofactor biosynthesis; tetrahydrofolate biosynthesis; 7,8-dihydrofolate from 2-amino-4-hydroxy-6-hydroxymethyl-7,8-dihydropteridine diphosphate and 4-aminobenzoate: step 1/2. Functionally, can complement an H.volcanii mutant strain that is thymidine auxotroph because it lacks the two dihydrofolate reductase genes encoded by hdrA and hdrB. The protein is Probable bifunctional folylpolyglutamate synthase/dihydropteroate synthase (folCP) of Haloferax volcanii (strain ATCC 29605 / DSM 3757 / JCM 8879 / NBRC 14742 / NCIMB 2012 / VKM B-1768 / DS2) (Halobacterium volcanii).